Consider the following 264-residue polypeptide: Acyl-[acyl-carrier-protein]--UDP-N-acetylglucosamine O-acyltransferase (264 aa).

The protein belongs to the transferase hexapeptide repeat family. LpxA subfamily. In terms of assembly, homotrimer.

It is found in the cytoplasm. It carries out the reaction a (3R)-hydroxyacyl-[ACP] + UDP-N-acetyl-alpha-D-glucosamine = a UDP-3-O-[(3R)-3-hydroxyacyl]-N-acetyl-alpha-D-glucosamine + holo-[ACP]. The protein operates within glycolipid biosynthesis; lipid IV(A) biosynthesis; lipid IV(A) from (3R)-3-hydroxytetradecanoyl-[acyl-carrier-protein] and UDP-N-acetyl-alpha-D-glucosamine: step 1/6. Functionally, involved in the biosynthesis of lipid A, a phosphorylated glycolipid that anchors the lipopolysaccharide to the outer membrane of the cell. The chain is Acyl-[acyl-carrier-protein]--UDP-N-acetylglucosamine O-acyltransferase from Rickettsia canadensis (strain McKiel).